A 167-amino-acid polypeptide reads, in one-letter code: Translationally-controlled tumor protein homolog (167 aa).

Positions methionine 1 to isoleucine 167 constitute a TCTP domain.

Belongs to the TCTP family.

It is found in the cytoplasm. It localises to the cytoskeleton. In terms of biological role, involved in protein synthesis. Involved in microtubule stabilization. This is Translationally-controlled tumor protein homolog from Cryptococcus neoformans var. neoformans serotype D (strain B-3501A) (Filobasidiella neoformans).